The chain runs to 290 residues: UPF0761 membrane protein YihY (290 aa).

The next 6 membrane-spanning stretches (helical) occupy residues 44–64, 104–124, 140–160, 183–203, 210–230, and 244–264; these read LLSL…FPMF, VGAC…DSAL, FAVY…SLAI, IFPL…VPTI, AIVG…GFAL, and VLAV…IVLL.

This sequence belongs to the UPF0761 family.

It localises to the cell inner membrane. The protein is UPF0761 membrane protein YihY of Escherichia coli O7:K1 (strain IAI39 / ExPEC).